The chain runs to 467 residues: E3 ubiquitin-protein ligase TRIM11 (467 aa).

The segment at 16 to 57 (CAICLDYFTDPVMTDCGHNFCRECIRRCWGQPEGPYACPECR) adopts an RING-type zinc-finger fold. Residue Ser85 is modified to Phosphoserine. A B box-type zinc finger spans residues 87-127 (VPQGVCAAHREPLTTFCGDDLSLLCPTCERSEHWAHRVRPL). Cys92, His95, Cys114, and His119 together coordinate Zn(2+). Residues 127 to 207 (LQEAADDLKG…KLEEEELEVL (81 aa)) are a coiled coil. One can recognise a B30.2/SPRY domain in the interval 267–460 (ELRTVCRVPG…MTICRLIGVS (194 aa)). The segment covering 304-313 (DRRSVQRGEQ) has biased composition (basic and acidic residues). The disordered stretch occupies residues 304–325 (DRRSVQRGEQRQALPDSPERFD).

Belongs to the TRIM/RBCC family. In terms of assembly, binds cytoplasmic tail of integrin alpha-1. Interacts with the HN peptide. Interacts with PHOX2B. Interacts (when autoubiquitinated) with SQSTM1/p62; promoting AIM2 recruitment to autophagosomes. Interacts with AIM2; promoting its autophagy-dependent degradation. Post-translationally, autoubiquitinated upon DNA stimulation; autoubiquitination promotes interaction with SQSTM1/p62 and recruitment of AIM2 to autophagosomes.

Its subcellular location is the cytoplasm. It localises to the nucleus. It catalyses the reaction S-ubiquitinyl-[E2 ubiquitin-conjugating enzyme]-L-cysteine + [acceptor protein]-L-lysine = [E2 ubiquitin-conjugating enzyme]-L-cysteine + N(6)-ubiquitinyl-[acceptor protein]-L-lysine.. It functions in the pathway protein modification; protein ubiquitination. Its function is as follows. E3 ubiquitin-protein ligase that promotes the degradation of insoluble ubiquitinated proteins, including insoluble PAX6, poly-Gln repeat expanded HTT and poly-Ala repeat expanded ARX. Mediates PAX6 ubiquitination leading to proteasomal degradation, thereby modulating cortical neurogenesis. May also inhibit PAX6 transcriptional activity, possibly in part by preventing the binding of PAX6 to its consensus sequences. May contribute to the regulation of the intracellular level of HN (humanin) or HN-containing proteins through the proteasomal degradation pathway. Mediates MED15 ubiquitination leading to proteasomal degradation. May contribute to the innate restriction of retroviruses. Upon overexpression, reduces HIV-1 and murine leukemia virus infectivity, by suppressing viral gene expression. Antiviral activity depends on a functional E3 ubiquitin-protein ligase domain. May regulate TRIM5 turnover via the proteasome pathway, thus counteracting the TRIM5-mediated cross-species restriction of retroviral infection at early stages of the retroviral life cycle. Acts as an inhibitor of the AIM2 inflammasome by promoting autophagy-dependent degradation of AIM2. Mechanistically, undergoes autoubiquitination upon DNA stimulation, promoting interaction with AIM2 and SQSTM1/p62, leading to AIM2 recruitment to autophagosomes. This is E3 ubiquitin-protein ligase TRIM11 (Trim11) from Rattus norvegicus (Rat).